A 526-amino-acid polypeptide reads, in one-letter code: Lysine--tRNA ligase (526 aa).

The Mg(2+) site is built by glutamate 431 and glutamate 438.

It belongs to the class-II aminoacyl-tRNA synthetase family. As to quaternary structure, homodimer. It depends on Mg(2+) as a cofactor.

It localises to the cytoplasm. The enzyme catalyses tRNA(Lys) + L-lysine + ATP = L-lysyl-tRNA(Lys) + AMP + diphosphate. The sequence is that of Lysine--tRNA ligase from Chlamydia trachomatis serovar L2b (strain UCH-1/proctitis).